Consider the following 276-residue polypeptide: Large ribosomal subunit protein uL2c (276 aa).

Disordered stretches follow at residues 1 to 51 and 224 to 276; these read MAIR…GIIT and VVMN…RRRK. Composition is skewed to polar residues over residues 7 to 18 and 27 to 37; these read RTYTPSTRNRPI and SNPQKKLTSGQ.

The protein belongs to the universal ribosomal protein uL2 family. In terms of assembly, part of the 50S ribosomal subunit.

The protein localises to the plastid. The protein resides in the chloroplast. The sequence is that of Large ribosomal subunit protein uL2c (rpl2) from Cycas taitungensis (Prince sago).